Consider the following 329-residue polypeptide: GTP 3',8-cyclase (329 aa).

One can recognise a Radical SAM core domain in the interval methionine 1–alanine 229. Arginine 8 serves as a coordination point for GTP. Residues cysteine 15 and cysteine 19 each coordinate [4Fe-4S] cluster. Tyrosine 21 is an S-adenosyl-L-methionine binding site. Cysteine 22 is a binding site for [4Fe-4S] cluster. GTP is bound at residue arginine 60. Residue glycine 64 coordinates S-adenosyl-L-methionine. GTP is bound at residue threonine 91. Serine 115 contacts S-adenosyl-L-methionine. Lysine 155 is a binding site for GTP. Methionine 189 is a binding site for S-adenosyl-L-methionine. Positions 252 and 255 each coordinate [4Fe-4S] cluster. Arginine 257–arginine 259 serves as a coordination point for GTP. Cysteine 269 provides a ligand contact to [4Fe-4S] cluster.

It belongs to the radical SAM superfamily. MoaA family. In terms of assembly, monomer and homodimer. It depends on [4Fe-4S] cluster as a cofactor.

It carries out the reaction GTP + AH2 + S-adenosyl-L-methionine = (8S)-3',8-cyclo-7,8-dihydroguanosine 5'-triphosphate + 5'-deoxyadenosine + L-methionine + A + H(+). It functions in the pathway cofactor biosynthesis; molybdopterin biosynthesis. Its function is as follows. Catalyzes the cyclization of GTP to (8S)-3',8-cyclo-7,8-dihydroguanosine 5'-triphosphate. The sequence is that of GTP 3',8-cyclase from Picosynechococcus sp. (strain ATCC 27264 / PCC 7002 / PR-6) (Agmenellum quadruplicatum).